The primary structure comprises 347 residues: Spermidine/putrescine import ATP-binding protein PotA (347 aa).

The region spanning 6–238 (LEIRNLSHYY…PKTKFVADFI (233 aa)) is the ABC transporter domain. An ATP-binding site is contributed by 40 to 47 (GPSGCGKT).

This sequence belongs to the ABC transporter superfamily. Spermidine/putrescine importer (TC 3.A.1.11.1) family. As to quaternary structure, the complex is composed of two ATP-binding proteins (PotA), two transmembrane proteins (PotB and PotC) and a solute-binding protein (PotD).

Its subcellular location is the cell inner membrane. It carries out the reaction ATP + H2O + polyamine-[polyamine-binding protein]Side 1 = ADP + phosphate + polyamineSide 2 + [polyamine-binding protein]Side 1.. Functionally, part of the ABC transporter complex PotABCD involved in spermidine/putrescine import. Responsible for energy coupling to the transport system. This is Spermidine/putrescine import ATP-binding protein PotA from Borrelia garinii subsp. bavariensis (strain ATCC BAA-2496 / DSM 23469 / PBi) (Borreliella bavariensis).